A 445-amino-acid polypeptide reads, in one-letter code: Exodeoxyribonuclease 7 large subunit (445 aa).

Belongs to the XseA family. In terms of assembly, heterooligomer composed of large and small subunits.

The protein resides in the cytoplasm. The enzyme catalyses Exonucleolytic cleavage in either 5'- to 3'- or 3'- to 5'-direction to yield nucleoside 5'-phosphates.. Functionally, bidirectionally degrades single-stranded DNA into large acid-insoluble oligonucleotides, which are then degraded further into small acid-soluble oligonucleotides. This is Exodeoxyribonuclease 7 large subunit from Geotalea daltonii (strain DSM 22248 / JCM 15807 / FRC-32) (Geobacter daltonii).